We begin with the raw amino-acid sequence, 262 residues long: Thiazole synthase (262 aa).

Lysine 97 functions as the Schiff-base intermediate with DXP in the catalytic mechanism. 1-deoxy-D-xylulose 5-phosphate is bound by residues glycine 158, 185–186 (AG), and 207–208 (NT). The disordered stretch occupies residues 243–262 (DKAQASTPTVGQPFWHSAEY).

Belongs to the ThiG family. As to quaternary structure, homotetramer. Forms heterodimers with either ThiH or ThiS.

Its subcellular location is the cytoplasm. It catalyses the reaction [ThiS sulfur-carrier protein]-C-terminal-Gly-aminoethanethioate + 2-iminoacetate + 1-deoxy-D-xylulose 5-phosphate = [ThiS sulfur-carrier protein]-C-terminal Gly-Gly + 2-[(2R,5Z)-2-carboxy-4-methylthiazol-5(2H)-ylidene]ethyl phosphate + 2 H2O + H(+). The protein operates within cofactor biosynthesis; thiamine diphosphate biosynthesis. In terms of biological role, catalyzes the rearrangement of 1-deoxy-D-xylulose 5-phosphate (DXP) to produce the thiazole phosphate moiety of thiamine. Sulfur is provided by the thiocarboxylate moiety of the carrier protein ThiS. In vitro, sulfur can be provided by H(2)S. This is Thiazole synthase from Neisseria meningitidis serogroup B (strain ATCC BAA-335 / MC58).